Here is a 206-residue protein sequence, read N- to C-terminus: Small ribosomal subunit protein uS4 (206 aa).

In terms of domain architecture, S4 RNA-binding spans 96-156; it reads GRLDNVVYRM…EKSKKQARIK (61 aa).

Belongs to the universal ribosomal protein uS4 family. Part of the 30S ribosomal subunit. Contacts protein S5. The interaction surface between S4 and S5 is involved in control of translational fidelity.

Functionally, one of the primary rRNA binding proteins, it binds directly to 16S rRNA where it nucleates assembly of the body of the 30S subunit. Its function is as follows. With S5 and S12 plays an important role in translational accuracy. This chain is Small ribosomal subunit protein uS4, found in Histophilus somni (strain 129Pt) (Haemophilus somnus).